The following is a 1755-amino-acid chain: Transposon Ty1-OR Gag-Pol polyprotein (1755 aa).

Polar residues-rich tracts occupy residues 1-10 (MESQQLSNYP), 48-60 (TKANSQQTTTPAS), and 127-152 (QSQFPQYPSSVGTPLSTPSPESGNTF). 3 disordered regions span residues 1 to 93 (MESQ…MMTQ), 126 to 173 (PQSQ…RPPP), and 352 to 421 (GSRN…SKST). The span at 153 to 165 (TDSSSADSDMTST) shows a compositional bias: low complexity. The segment at 299 to 401 (NNGIHINNKV…NSKSKTARAH (103 aa)) is RNA-binding. Residues 402–418 (NVSTSNNSPSTDNDSIS) show a composition bias toward low complexity. Residue serine 416 is modified to Phosphoserine. Aspartate 461 acts as the For protease activity; shared with dimeric partner in catalysis. The interval 583–640 (NVHTSESTRKYPYPFIHRMLAHANAQTIRYSLKNNTITYFNESDVDWSSAIDYQCPDC) is integrase-type zinc finger-like. Residues 660–835 (NSYEPFQYLH…AGLDISTLLP (176 aa)) form the Integrase catalytic domain. Aspartate 671 and aspartate 736 together coordinate Mg(2+). Disordered regions lie at residues 956–1087 (SKAV…ETEK), 1092–1111 (RSPSIDASPPENNSSHNIVP), and 1130–1187 (DLPL…DNET). Over residues 960-969 (SPTDSTPPST) the composition is skewed to low complexity. Residues 1005-1015 (STPQISNIEST) are compositionally biased toward polar residues. The segment covering 1038 to 1053 (ESSHASKSKDFRHSDS) has biased composition (basic and acidic residues). 2 stretches are compositionally biased toward polar residues: residues 1054–1082 (YSENETNHTNVPISSTGGTNNKTVPQISD) and 1101–1111 (PENNSSHNIVP). Positions 1178-1212 (KKRSLEDNETEIKVSRDTWNTKNMRSLEPPRSKKR) match the Bipartite nuclear localization signal motif. In terms of domain architecture, Reverse transcriptase Ty1/copia-type spans 1338–1476 (NNYYITQLDI…DILGLEIKYQ (139 aa)). Positions 1346, 1427, 1428, 1610, 1652, and 1685 each coordinate Mg(2+). One can recognise an RNase H Ty1/copia-type domain in the interval 1610–1752 (DASYGNQPYY…IKTFKLLTNK (143 aa)).

In terms of assembly, the capsid protein forms a homotrimer, from which the VLPs are assembled. The protease is a homodimer, whose active site consists of two apposed aspartic acid residues. In terms of processing, initially, virus-like particles (VLPs) are composed of the structural unprocessed proteins Gag and Gag-Pol, and also contain the host initiator methionine tRNA (tRNA(i)-Met) which serves as a primer for minus-strand DNA synthesis, and a dimer of genomic Ty RNA. Processing of the polyproteins occurs within the particle and proceeds by an ordered pathway, called maturation. First, the protease (PR) is released by autocatalytic cleavage of the Gag-Pol polyprotein yielding capsid protein p45 and a Pol-p154 precursor protein. This cleavage is a prerequisite for subsequent processing of Pol-p154 at the remaining sites to release the mature structural and catalytic proteins. Maturation takes place prior to the RT reaction and is required to produce transposition-competent VLPs.

Its subcellular location is the cytoplasm. It localises to the nucleus. The enzyme catalyses DNA(n) + a 2'-deoxyribonucleoside 5'-triphosphate = DNA(n+1) + diphosphate. It carries out the reaction Endonucleolytic cleavage to 5'-phosphomonoester.. In terms of biological role, capsid protein (CA) is the structural component of the virus-like particle (VLP), forming the shell that encapsulates the retrotransposons dimeric RNA genome. The particles are assembled from trimer-clustered units and there are holes in the capsid shells that allow for the diffusion of macromolecules. CA also has nucleocapsid-like chaperone activity, promoting primer tRNA(i)-Met annealing to the multipartite primer-binding site (PBS), dimerization of Ty1 RNA and initiation of reverse transcription. Functionally, the aspartyl protease (PR) mediates the proteolytic cleavages of the Gag and Gag-Pol polyproteins after assembly of the VLP. Its function is as follows. Reverse transcriptase/ribonuclease H (RT) is a multifunctional enzyme that catalyzes the conversion of the retro-elements RNA genome into dsDNA within the VLP. The enzyme displays a DNA polymerase activity that can copy either DNA or RNA templates, and a ribonuclease H (RNase H) activity that cleaves the RNA strand of RNA-DNA heteroduplexes during plus-strand synthesis and hydrolyzes RNA primers. The conversion leads to a linear dsDNA copy of the retrotransposon that includes long terminal repeats (LTRs) at both ends. Integrase (IN) targets the VLP to the nucleus, where a subparticle preintegration complex (PIC) containing at least integrase and the newly synthesized dsDNA copy of the retrotransposon must transit the nuclear membrane. Once in the nucleus, integrase performs the integration of the dsDNA into the host genome. This is Transposon Ty1-OR Gag-Pol polyprotein (TY1B-OR) from Saccharomyces cerevisiae (strain ATCC 204508 / S288c) (Baker's yeast).